The sequence spans 376 residues: MESNVNDEIEKAFAKDSELAKDIIKQYGKTKSIQPLVHRICKYINTLQKENESGQVKEAGSLKRKDRVQHELGQLVYGVLNLSFQAPMRKKLDVYIYENGIAVTLPGEPNLIEFWLPWNEIRCAIHVPCPRKANVQNNFVIILKSESSAENIVSSDNVKEPVFFTAPYPLKKLNLVEGLRSFTHCTNSWDIFRDYFEFIGTSTLSPSVEEFVCPNPQTGDNGTTYGVEANYKAKDGHLFFLRTGILWGFRKPILFIELASIQHFSYSNVLQRTFTVNFEAGGTIYSFDMVDQSVFRAVNDYATKHGLMDSSLAEEKAAPVPKNPSVSYLNEASSLENVDDMDDIDVKEPLFSDNDEDVENSDSEDGSESIGSEDEE.

Positions 334–376 are disordered; it reads SLENVDDMDDIDVKEPLFSDNDEDVENSDSEDGSESIGSEDEE. Positions 353-376 are enriched in acidic residues; that stretch reads DNDEDVENSDSEDGSESIGSEDEE.

Belongs to the RTT106 family.

Has a role in meiosis. This chain is Meiotically up-regulated gene 183 protein (mug183), found in Schizosaccharomyces pombe (strain 972 / ATCC 24843) (Fission yeast).